The following is a 256-amino-acid chain: Protein FixA (256 aa).

Belongs to the ETF beta-subunit/FixA family. In terms of assembly, heterodimer of FixA and FixB.

It participates in amine and polyamine metabolism; carnitine metabolism. Required for anaerobic carnitine reduction. May bring reductant to CaiA. The protein is Protein FixA of Escherichia coli O139:H28 (strain E24377A / ETEC).